A 142-amino-acid chain; its full sequence is Putative 2'-deoxynucleoside 5'-phosphate N-hydrolase 1 (142 aa).

Substrate contacts are provided by residues 4–10 (FFSGSIR), Tyr19, His36, Glu82, and 106–108 (SAM).

This sequence belongs to the 2'-deoxynucleoside 5'-phosphate N-hydrolase 1 family. As to quaternary structure, monomer and homodimer.

It carries out the reaction a pyrimidine 2'-deoxyribonucleoside 5'-phosphate + H2O = a pyrimidine nucleobase + 2-deoxy-D-ribose 5-phosphate. The enzyme catalyses a purine 2'-deoxyribonucleoside 5'-phosphate + H2O = a purine nucleobase + 2-deoxy-D-ribose 5-phosphate. Its function is as follows. Catalyzes the cleavage of the N-glycosidic bond of deoxyribonucleoside 5'-monophosphates to yield deoxyribose 5-phosphate and a purine or pyrimidine base. This Syntrophotalea carbinolica (strain DSM 2380 / NBRC 103641 / GraBd1) (Pelobacter carbinolicus) protein is Putative 2'-deoxynucleoside 5'-phosphate N-hydrolase 1.